Reading from the N-terminus, the 149-residue chain is Calmodulin-2 (149 aa).

4 consecutive EF-hand domains span residues 8 to 43 (DQISEFKEAFSLFDKDGDGCITTKELGTVMRSLGQN), 44 to 79 (PTEAELQDMINEVDADGNGTIDFPEFLNLMARKMKD), 81 to 116 (DSEEELKEAFRVFDKDQNGFISAAELRHVMTNLGEK), and 117 to 149 (LTDEEVDEMIKEADVDGDGQINYEEFVKVMMAK). Residues aspartate 21, aspartate 23, aspartate 25, cysteine 27, glutamate 32, aspartate 57, aspartate 59, asparagine 61, threonine 63, glutamate 68, aspartate 94, aspartate 96, asparagine 98, glutamate 105, aspartate 130, aspartate 132, aspartate 134, glutamine 136, and glutamate 141 each contribute to the Ca(2+) site.

It belongs to the calmodulin family. In terms of assembly, interacts with KCBP and CIP111. Binds to IQD1 and IQD20.

The protein localises to the cytoplasm. It is found in the cytoskeleton. Calmodulin mediates the control of a large number of enzymes, ion channels and other proteins by Ca(2+). Among the enzymes to be stimulated by the calmodulin-Ca(2+) complex are a number of protein kinases and phosphatases. This Arabidopsis thaliana (Mouse-ear cress) protein is Calmodulin-2 (CAM2).